We begin with the raw amino-acid sequence, 486 residues long: Betaine aldehyde dehydrogenase (486 aa).

Residues T23 and D90 each coordinate K(+). An NAD(+)-binding site is contributed by 147–149; the sequence is GAW. K159 (charge relay system) is an active-site residue. Residues 173–176 and 226–229 contribute to the NAD(+) site; these read KPSE and ESGT. L241 contributes to the K(+) binding site. The Proton acceptor role is filled by E247. Residues G249, C281, and E382 each coordinate NAD(+). C281 acts as the Nucleophile in catalysis. At C281 the chain carries Cysteine sulfenic acid (-SOH). Residues K452 and G455 each coordinate K(+). Catalysis depends on E459, which acts as the Charge relay system.

The protein belongs to the aldehyde dehydrogenase family. Dimer of dimers. K(+) serves as cofactor.

The catalysed reaction is betaine aldehyde + NAD(+) + H2O = glycine betaine + NADH + 2 H(+). It functions in the pathway amine and polyamine biosynthesis; betaine biosynthesis via choline pathway; betaine from betaine aldehyde: step 1/1. Its function is as follows. Involved in the biosynthesis of the osmoprotectant glycine betaine. Catalyzes the irreversible oxidation of betaine aldehyde to the corresponding acid. The protein is Betaine aldehyde dehydrogenase of Vibrio parahaemolyticus serotype O3:K6 (strain RIMD 2210633).